Reading from the N-terminus, the 219-residue chain is uncharacterized protein (219 aa).

Residues 1-26 form the signal peptide; that stretch reads MNDRGVPNSRTGPSLLALLPAANSYA. Disordered stretches follow at residues 36-57 and 88-219; these read AVGV…TRGG and SGLG…GLCE. Residues 127–173 show a composition bias toward low complexity; it reads LSPPSALGSSPAGRGRPAPAIAAAKSSPLSASAAPGRCGARPRAPSR. Basic residues predominate over residues 176 to 202; sequence RERRPRGNPRAPLRRGARGRRRSHTRG.

This is an uncharacterized protein from Gallid herpesvirus 2 (strain Chicken/Md5/ATCC VR-987) (GaHV-2).